Here is a 414-residue protein sequence, read N- to C-terminus: Cyclin-B1-3 (414 aa).

The protein belongs to the cyclin family. Cyclin AB subfamily. Expressed in roots, stems and flowers.

The sequence is that of Cyclin-B1-3 (CYCB1-3) from Arabidopsis thaliana (Mouse-ear cress).